The sequence spans 119 residues: ATP-dependent Clp protease adapter protein ClpS (119 aa).

A disordered region spans residues 1–29; sequence MICPPGENKSMAERKQGGQGNGVGSSVVT.

Belongs to the ClpS family. Binds to the N-terminal domain of the chaperone ClpA.

Functionally, involved in the modulation of the specificity of the ClpAP-mediated ATP-dependent protein degradation. This Caulobacter vibrioides (strain ATCC 19089 / CIP 103742 / CB 15) (Caulobacter crescentus) protein is ATP-dependent Clp protease adapter protein ClpS.